A 147-amino-acid chain; its full sequence is Lipoprotein YafY (147 aa).

The N-terminal stretch at 1–20 (MKRKTLPLLALVATTLFLIA) is a signal peptide. A lipid anchor (N-palmitoyl cysteine) is attached at cysteine 21. Cysteine 21 carries the S-diacylglycerol cysteine lipid modification.

This sequence to E.coli YfjS.

The protein resides in the cell inner membrane. In terms of biological role, when overproduced strongly induces degP through the activation of the two-component envelope stress response system CpxA/CpxR. The polypeptide is Lipoprotein YafY (yafY) (Escherichia coli (strain K12)).